A 370-amino-acid chain; its full sequence is Dual-specificity RNA methyltransferase RlmN (370 aa).

E93 serves as the catalytic Proton acceptor. Residues 99–331 (DRKRGTLCVS…TRVRRTRGDD (233 aa)) form the Radical SAM core domain. A disulfide bridge connects residues C106 and C336. Residues C113, C117, and C120 each coordinate [4Fe-4S] cluster. S-adenosyl-L-methionine-binding positions include 162–163 (GE), S194, 216–218 (SLH), and N293. The S-methylcysteine intermediate role is filled by C336.

This sequence belongs to the radical SAM superfamily. RlmN family. [4Fe-4S] cluster is required as a cofactor.

The protein localises to the cytoplasm. It catalyses the reaction adenosine(2503) in 23S rRNA + 2 reduced [2Fe-2S]-[ferredoxin] + 2 S-adenosyl-L-methionine = 2-methyladenosine(2503) in 23S rRNA + 5'-deoxyadenosine + L-methionine + 2 oxidized [2Fe-2S]-[ferredoxin] + S-adenosyl-L-homocysteine. The catalysed reaction is adenosine(37) in tRNA + 2 reduced [2Fe-2S]-[ferredoxin] + 2 S-adenosyl-L-methionine = 2-methyladenosine(37) in tRNA + 5'-deoxyadenosine + L-methionine + 2 oxidized [2Fe-2S]-[ferredoxin] + S-adenosyl-L-homocysteine. In terms of biological role, specifically methylates position 2 of adenine 2503 in 23S rRNA and position 2 of adenine 37 in tRNAs. m2A2503 modification seems to play a crucial role in the proofreading step occurring at the peptidyl transferase center and thus would serve to optimize ribosomal fidelity. The protein is Dual-specificity RNA methyltransferase RlmN of Coxiella burnetii (strain RSA 493 / Nine Mile phase I).